Reading from the N-terminus, the 396-residue chain is Cell adhesion molecule 3 (396 aa).

The signal sequence occupies residues 1–22 (MGAPSALPLLLLLACSWAPGGA). An Ig-like V-type domain is found at 23–124 (NLSQDDSQPW…VRTAKSLVTV (102 aa)). Topologically, residues 23–328 (NLSQDDSQPW…PVPSSSSTYH (306 aa)) are extracellular. 3 cysteine pairs are disulfide-bonded: C48/C108, C150/C207, and C252/C297. 2 Ig-like C2-type domains span residues 128 to 226 (PQKP…QRIE) and 231 to 313 (PTAM…FTLN). N-linked (GlcNAc...) asparagine glycosylation is present at N288. The helical transmembrane segment at 329-349 (AIIGGIVAFIVFLLLILLIFL) threads the bilayer. Residues 350-396 (GHYLIRHKGTYLTHEAKGSDDAPDADTAIINAEGGQSGGDDKKEYFI) lie on the Cytoplasmic side of the membrane. Residues 365 to 396 (AKGSDDAPDADTAIINAEGGQSGGDDKKEYFI) are disordered. S386 is modified (phosphoserine).

It belongs to the nectin family. As to quaternary structure, homodimer. Can form trans-heterodimers with NECTIN3. Interacts with EPB41L1, DLG3, PALS2 and CASK.

Its subcellular location is the cell membrane. The protein resides in the cell junction. Its function is as follows. Involved in cell-cell adhesion. Has both calcium-independent homophilic cell-cell adhesion activity and calcium-independent heterophilic cell-cell adhesion activity with IGSF4, NECTIN1 and NECTIN3. Interaction with EPB41L1 may regulate structure or function of cell-cell junctions. The chain is Cell adhesion molecule 3 (Cadm3) from Rattus norvegicus (Rat).